The following is a 110-amino-acid chain: Holo-[acyl-carrier-protein] synthase (110 aa).

Mg(2+) is bound by residues D8 and E54.

This sequence belongs to the P-Pant transferase superfamily. AcpS family. The cofactor is Mg(2+).

It localises to the cytoplasm. It carries out the reaction apo-[ACP] + CoA = holo-[ACP] + adenosine 3',5'-bisphosphate + H(+). Functionally, transfers the 4'-phosphopantetheine moiety from coenzyme A to a Ser of acyl-carrier-protein. This chain is Holo-[acyl-carrier-protein] synthase, found in Mycoplasma capricolum subsp. capricolum (strain California kid / ATCC 27343 / NCTC 10154).